A 206-amino-acid chain; its full sequence is Pyridoxine/pyridoxamine 5'-phosphate oxidase (206 aa).

FMN is bound by residues 53–58 (RMVLLK), 68–69 (YT), Lys75, and Gln97. Lys58 provides a ligand contact to substrate. Substrate is bound by residues Tyr115, Arg119, and Ser123. Residues 132 to 133 (QS) and Trp177 each bind FMN. 183–185 (RLH) is a substrate binding site. Arg187 lines the FMN pocket.

The protein belongs to the pyridoxamine 5'-phosphate oxidase family. As to quaternary structure, homodimer. FMN is required as a cofactor.

It catalyses the reaction pyridoxamine 5'-phosphate + O2 + H2O = pyridoxal 5'-phosphate + H2O2 + NH4(+). The enzyme catalyses pyridoxine 5'-phosphate + O2 = pyridoxal 5'-phosphate + H2O2. It functions in the pathway cofactor metabolism; pyridoxal 5'-phosphate salvage; pyridoxal 5'-phosphate from pyridoxamine 5'-phosphate: step 1/1. The protein operates within cofactor metabolism; pyridoxal 5'-phosphate salvage; pyridoxal 5'-phosphate from pyridoxine 5'-phosphate: step 1/1. Functionally, catalyzes the oxidation of either pyridoxine 5'-phosphate (PNP) or pyridoxamine 5'-phosphate (PMP) into pyridoxal 5'-phosphate (PLP). The chain is Pyridoxine/pyridoxamine 5'-phosphate oxidase from Allorhizobium ampelinum (strain ATCC BAA-846 / DSM 112012 / S4) (Agrobacterium vitis (strain S4)).